Consider the following 419-residue polypeptide: UDP-N-acetylglucosamine 1-carboxyvinyltransferase (419 aa).

Phosphoenolpyruvate is bound at residue 22–23 (KN). Position 92 (arginine 92) interacts with UDP-N-acetyl-alpha-D-glucosamine. The active-site Proton donor is cysteine 116. At cysteine 116 the chain carries 2-(S-cysteinyl)pyruvic acid O-phosphothioketal. UDP-N-acetyl-alpha-D-glucosamine-binding positions include 121-125 (RPIDL), aspartate 306, and isoleucine 328.

The protein belongs to the EPSP synthase family. MurA subfamily.

It localises to the cytoplasm. The catalysed reaction is phosphoenolpyruvate + UDP-N-acetyl-alpha-D-glucosamine = UDP-N-acetyl-3-O-(1-carboxyvinyl)-alpha-D-glucosamine + phosphate. It participates in cell wall biogenesis; peptidoglycan biosynthesis. Cell wall formation. Adds enolpyruvyl to UDP-N-acetylglucosamine. Target for the antibiotic fosfomycin. Involved in heteroresistance to antibiotic fosfomycin. Heteroresistance is the ability of a clonal population to grow one or several subpopulations at a frequency of 10(-7) to 10(-3) in the presence of a higher antibiotic concentration than that predicted to be effective by measurement of the minimum inhibitory concentration (MIC). This Streptococcus pneumoniae serotype 2 (strain D39 / NCTC 7466) protein is UDP-N-acetylglucosamine 1-carboxyvinyltransferase.